Reading from the N-terminus, the 35-residue chain is uncharacterized protein (35 aa).

A helical membrane pass occupies residues 10 to 30 (LMITASFFAIFIIIVVSVLLL).

The protein localises to the membrane. This is an uncharacterized protein from Salmonella typhimurium (strain LT2 / SGSC1412 / ATCC 700720).